The primary structure comprises 208 residues: N-(5'-phosphoribosyl)anthranilate isomerase (208 aa).

Belongs to the TrpF family.

The catalysed reaction is N-(5-phospho-beta-D-ribosyl)anthranilate = 1-(2-carboxyphenylamino)-1-deoxy-D-ribulose 5-phosphate. It functions in the pathway amino-acid biosynthesis; L-tryptophan biosynthesis; L-tryptophan from chorismate: step 3/5. In Nitrosospira multiformis (strain ATCC 25196 / NCIMB 11849 / C 71), this protein is N-(5'-phosphoribosyl)anthranilate isomerase.